Consider the following 504-residue polypeptide: Cytochrome P450 2D1 (504 aa).

Position 446 (Cys-446) interacts with heme.

It belongs to the cytochrome P450 family. Heme is required as a cofactor.

The protein resides in the endoplasmic reticulum membrane. The protein localises to the microsome membrane. It catalyses the reaction an organic molecule + reduced [NADPH--hemoprotein reductase] + O2 = an alcohol + oxidized [NADPH--hemoprotein reductase] + H2O + H(+). In terms of biological role, cytochromes P450 are a group of heme-thiolate monooxygenases. In liver microsomes, this enzyme is involved in an NADPH-dependent electron transport pathway. It oxidizes a variety of structurally unrelated compounds, including steroids, fatty acids, and xenobiotics. This Rattus norvegicus (Rat) protein is Cytochrome P450 2D1 (Cyp2d1).